We begin with the raw amino-acid sequence, 257 residues long: Ditrans,polycis-undecaprenyl-diphosphate synthase ((2E,6E)-farnesyl-diphosphate specific) (257 aa).

Aspartate 23 is a catalytic residue. Residue aspartate 23 coordinates Mg(2+). Substrate is bound by residues 24–27 (GNGR), tryptophan 28, arginine 36, histidine 40, and 68–70 (SSE). The active-site Proton acceptor is the asparagine 71. Substrate is bound by residues tryptophan 72, arginine 74, arginine 191, and 197-199 (RIS). Residue glutamate 210 coordinates Mg(2+).

It belongs to the UPP synthase family. In terms of assembly, homodimer. Mg(2+) is required as a cofactor.

The enzyme catalyses 8 isopentenyl diphosphate + (2E,6E)-farnesyl diphosphate = di-trans,octa-cis-undecaprenyl diphosphate + 8 diphosphate. Its function is as follows. Catalyzes the sequential condensation of isopentenyl diphosphate (IPP) with (2E,6E)-farnesyl diphosphate (E,E-FPP) to yield (2Z,6Z,10Z,14Z,18Z,22Z,26Z,30Z,34E,38E)-undecaprenyl diphosphate (di-trans,octa-cis-UPP). UPP is the precursor of glycosyl carrier lipid in the biosynthesis of bacterial cell wall polysaccharide components such as peptidoglycan and lipopolysaccharide. This chain is Ditrans,polycis-undecaprenyl-diphosphate synthase ((2E,6E)-farnesyl-diphosphate specific), found in Xanthomonas axonopodis pv. citri (strain 306).